A 642-amino-acid chain; its full sequence is Conserved oligomeric Golgi complex subunit 6 (642 aa).

Belongs to the COG6 family. In terms of assembly, component of the conserved oligomeric Golgi complex which is composed of eight different subunits and is required for normal Golgi morphology and localization.

Its subcellular location is the golgi apparatus membrane. Its function is as follows. Required for normal Golgi function. The chain is Conserved oligomeric Golgi complex subunit 6 (cogc-6) from Caenorhabditis elegans.